The following is a 186-amino-acid chain: Large ribosomal subunit protein uL6 (186 aa).

This sequence belongs to the universal ribosomal protein uL6 family. Part of the 50S ribosomal subunit.

In terms of biological role, this protein binds to the 23S rRNA, and is important in its secondary structure. It is located near the subunit interface in the base of the L7/L12 stalk, and near the tRNA binding site of the peptidyltransferase center. The sequence is that of Large ribosomal subunit protein uL6 from Ignicoccus hospitalis (strain KIN4/I / DSM 18386 / JCM 14125).